The sequence spans 361 residues: Transposase A from transposon Tn554 (361 aa).

A Core-binding (CB) domain is found at 23-120 (YQLIEPVMKF…VVMSFLDYLS (98 aa)). In terms of domain architecture, Tyr recombinase spans 163 to 351 (KQIRTLRSKE…SDQDMKNEFN (189 aa)). Residues arginine 198, lysine 232, histidine 302, arginine 305, and histidine 328 contribute to the active site. The O-(3'-phospho-DNA)-tyrosine intermediate role is filled by tyrosine 338.

It belongs to the 'phage' integrase family.

Functionally, one of three proteins encoded by transposon Tn554 required for its transposition. The chain is Transposase A from transposon Tn554 (tnpA1) from Staphylococcus aureus (strain Mu50 / ATCC 700699).